Reading from the N-terminus, the 446-residue chain is Mycosin-1 (446 aa).

Positions M1–A21 are cleaved as a signal peptide. Residues P24–T43 form a disordered region. Positions P64–L387 constitute a Peptidase S8 domain. Active-site charge relay system residues include D90, H121, and S332. The chain crosses the membrane as a helical span at residues I419 to A439.

It belongs to the peptidase S8 family.

It localises to the cell membrane. May play a dual role in regulation of ESX-1 secretion and virulence. Acts as a protease that cleaves EspB. Essential for ESX-1 function, required for early replication in macrophages and full virulence in mice. The polypeptide is Mycosin-1 (Mycobacterium tuberculosis (strain ATCC 25618 / H37Rv)).